Reading from the N-terminus, the 121-residue chain is MDYEFLRDITGVVKVRLSMGHEALGHWFNEEVKGNLALLDEVEAAARDVKGSERQWQKTGHEYTLWLDGEEVMVRANQLEFSGDEMEEGMSYYDEESLSLCGVEDFLQVVQAYRDFLAQYG.

This sequence belongs to the UPF0231 family.

The chain is UPF0231 protein ESA_03214 from Cronobacter sakazakii (strain ATCC BAA-894) (Enterobacter sakazakii).